Reading from the N-terminus, the 266-residue chain is Glutamate racemase (266 aa).

Substrate is bound by residues 7-8 (DS) and 39-40 (YG). C70 functions as the Proton donor/acceptor in the catalytic mechanism. 71-72 (NT) serves as a coordination point for substrate. Catalysis depends on C186, which acts as the Proton donor/acceptor. Residue 187-188 (TH) participates in substrate binding.

The protein belongs to the aspartate/glutamate racemases family.

It carries out the reaction L-glutamate = D-glutamate. It participates in cell wall biogenesis; peptidoglycan biosynthesis. Provides the (R)-glutamate required for cell wall biosynthesis. In Campylobacter curvus (strain 525.92), this protein is Glutamate racemase.